The chain runs to 39 residues: MTSQARIPLWIVAVVAGLGVITVVGLFFYGSYVGLGSSL.

A helical membrane pass occupies residues 7–27 (IPLWIVAVVAGLGVITVVGLF).

The protein belongs to the PsbJ family. In terms of assembly, PSII is composed of 1 copy each of membrane proteins PsbA, PsbB, PsbC, PsbD, PsbE, PsbF, PsbH, PsbI, PsbJ, PsbK, PsbL, PsbM, PsbT, PsbX, PsbY, PsbZ, Psb30/Ycf12, peripheral proteins PsbO, CyanoQ (PsbQ), PsbU, PsbV and a large number of cofactors. It forms dimeric complexes.

It localises to the cellular thylakoid membrane. One of the components of the core complex of photosystem II (PSII). PSII is a light-driven water:plastoquinone oxidoreductase that uses light energy to abstract electrons from H(2)O, generating O(2) and a proton gradient subsequently used for ATP formation. It consists of a core antenna complex that captures photons, and an electron transfer chain that converts photonic excitation into a charge separation. This chain is Photosystem II reaction center protein J, found in Synechococcus sp. (strain JA-2-3B'a(2-13)) (Cyanobacteria bacterium Yellowstone B-Prime).